The sequence spans 607 residues: Bifunctional lysine-specific demethylase and histidyl-hydroxylase NO66 (607 aa).

Disordered stretches follow at residues G23 to N121 and A139 to E184. The span at T25–T37 shows a compositional bias: polar residues. Residues S39–K58 are compositionally biased toward basic residues. Basic and acidic residues predominate over residues D156–T167. One can recognise a JmjC domain in the interval E188–A405. Residues H328, D330, and H371 each contribute to the Fe cation site.

This sequence belongs to the ROX family. NO66 subfamily. Fe(2+) serves as cofactor.

Its subcellular location is the nucleus. The enzyme catalyses L-histidyl-[protein] + 2-oxoglutarate + O2 = (3S)-3-hydroxy-L-histidyl-[protein] + succinate + CO2. It carries out the reaction N(6),N(6)-dimethyl-L-lysyl(36)-[histone H3] + 2 2-oxoglutarate + 2 O2 = L-lysyl(36)-[histone H3] + 2 formaldehyde + 2 succinate + 2 CO2. Functionally, oxygenase that can act as both a histone lysine demethylase and a ribosomal histidine hydroxylase. Specifically demethylates 'Lys-4' (H3K4me) and 'Lys-36' (H3K36me) of histone H3, thereby playing a central role in histone code. Also catalyzes the hydroxylation of 60S ribosomal protein L8. This Branchiostoma floridae (Florida lancelet) protein is Bifunctional lysine-specific demethylase and histidyl-hydroxylase NO66.